Consider the following 179-residue polypeptide: Bifunctional protein PyrR (179 aa).

The PRPP-binding motif lies at 100-112; sequence VILVDDVLFTGRT.

Belongs to the purine/pyrimidine phosphoribosyltransferase family. PyrR subfamily.

The enzyme catalyses UMP + diphosphate = 5-phospho-alpha-D-ribose 1-diphosphate + uracil. Regulates the transcription of the pyrimidine nucleotide (pyr) operon in response to exogenous pyrimidines. Its function is as follows. Also displays a weak uracil phosphoribosyltransferase activity which is not physiologically significant. This chain is Bifunctional protein PyrR, found in Actinobacillus succinogenes (strain ATCC 55618 / DSM 22257 / CCUG 43843 / 130Z).